We begin with the raw amino-acid sequence, 250 residues long: 5-oxoprolinase subunit A (250 aa).

The protein belongs to the LamB/PxpA family. Forms a complex composed of PxpA, PxpB and PxpC.

It catalyses the reaction 5-oxo-L-proline + ATP + 2 H2O = L-glutamate + ADP + phosphate + H(+). Its function is as follows. Catalyzes the cleavage of 5-oxoproline to form L-glutamate coupled to the hydrolysis of ATP to ADP and inorganic phosphate. The polypeptide is 5-oxoprolinase subunit A (Staphylococcus aureus (strain bovine RF122 / ET3-1)).